Here is a 152-residue protein sequence, read N- to C-terminus: 6,7-dimethyl-8-ribityllumazine synthase (152 aa).

5-amino-6-(D-ribitylamino)uracil-binding positions include F21, 55 to 57, and 79 to 81; these read AFE and CVI. Residue 84–85 coordinates (2S)-2-hydroxy-3-oxobutyl phosphate; that stretch reads AT. H87 functions as the Proton donor in the catalytic mechanism. Position 112 (F112) interacts with 5-amino-6-(D-ribitylamino)uracil. R126 serves as a coordination point for (2S)-2-hydroxy-3-oxobutyl phosphate.

This sequence belongs to the DMRL synthase family. In terms of assembly, forms an icosahedral capsid composed of 60 subunits, arranged as a dodecamer of pentamers.

It carries out the reaction (2S)-2-hydroxy-3-oxobutyl phosphate + 5-amino-6-(D-ribitylamino)uracil = 6,7-dimethyl-8-(1-D-ribityl)lumazine + phosphate + 2 H2O + H(+). Its pathway is cofactor biosynthesis; riboflavin biosynthesis; riboflavin from 2-hydroxy-3-oxobutyl phosphate and 5-amino-6-(D-ribitylamino)uracil: step 1/2. Functionally, catalyzes the formation of 6,7-dimethyl-8-ribityllumazine by condensation of 5-amino-6-(D-ribitylamino)uracil with 3,4-dihydroxy-2-butanone 4-phosphate. This is the penultimate step in the biosynthesis of riboflavin. This Staphylococcus carnosus (strain TM300) protein is 6,7-dimethyl-8-ribityllumazine synthase.